The primary structure comprises 32 residues: Glutathione S-transferase 8.2 (32 aa).

21-22 contacts glutathione; the sequence is QS.

Belongs to the GST superfamily. Alpha family. Homodimer. The N-terminus is blocked.

Its subcellular location is the cytoplasm. The enzyme catalyses RX + glutathione = an S-substituted glutathione + a halide anion + H(+). Conjugation of reduced glutathione to a wide number of exogenous and endogenous hydrophobic electrophiles. In Dicentrarchus labrax (European seabass), this protein is Glutathione S-transferase 8.2.